The following is a 109-amino-acid chain: uncharacterized protein (109 aa).

Positions 1 to 23 (MKNYNFILISLFIIFFIILNISS) are cleaved as a signal peptide. N-linked (GlcNAc...) asparagine glycosylation occurs at Asn-27. Positions 45-109 (YQEYMENRTP…KKDQQNQQQN (65 aa)) are disordered. Residues 54–72 (PNEQQQQQQQQQNNNNPPQ) show a composition bias toward low complexity. Residues 94–103 (KLKEKLKKDQ) show a composition bias toward basic and acidic residues.

Its subcellular location is the secreted. This is an uncharacterized protein from Dictyostelium discoideum (Social amoeba).